The following is a 219-amino-acid chain: Mitochondrial fission factor homolog A (219 aa).

Residues 1–199 (MAEINRMQYE…ENKERVKHEM (199 aa)) are Cytoplasmic-facing. Residues 164 to 194 (DLALADAASLRRQIIKLNRRLLLLEEENKER) are a coiled coil. Residues 200–217 (TMYSIIIIFGLLNSWLWL) traverse the membrane as a helical; Anchor for type IV membrane protein segment. Topologically, residues 218–219 (RR) are extracellular.

This sequence belongs to the Tango11 family.

It localises to the mitochondrion outer membrane. The protein resides in the peroxisome. The protein localises to the cytoplasmic vesicle. Its subcellular location is the secretory vesicle. It is found in the synaptic vesicle. In terms of biological role, plays a role in mitochondrial and peroxisomal fission. Promotes the recruitment and association of the fission mediator dynamin-related protein 1 (DNM1L) to the mitochondrial surface. The sequence is that of Mitochondrial fission factor homolog A (mff-a) from Xenopus laevis (African clawed frog).